We begin with the raw amino-acid sequence, 69 residues long: Pleurain-A4 (69 aa).

An N-terminal signal peptide occupies residues 1 to 22; sequence MFTLKKTLLLLFFLGTISISLC. A propeptide spanning residues 23–43 is cleaved from the precursor; the sequence is KQERDADEDDGRKMTEEEVKR. Cys-63 and Cys-69 are disulfide-bonded.

This sequence belongs to the frog skin active peptide (FSAP) family. Pleurain subfamily. Expressed by the skin glands.

The protein localises to the secreted. Antimicrobial peptide. Has activity against Gram-positive and -negative bacteria, and fungi. Has little hemolytic activity on red blood cells. The polypeptide is Pleurain-A4 (Nidirana pleuraden (Yunnan pond frog)).